The primary structure comprises 323 residues: Small ribosomal subunit protein uS2 (323 aa).

The interval 295-323 (VVNRDRAGFNKKQPKAEEAAKPAEKKAEK) is disordered.

This sequence belongs to the universal ribosomal protein uS2 family.

This chain is Small ribosomal subunit protein uS2, found in Mycoplasmoides gallisepticum (strain R(low / passage 15 / clone 2)) (Mycoplasma gallisepticum).